The chain runs to 332 residues: Ubiquinol oxidase 1a, mitochondrial (332 aa).

The N-terminal 54 residues, 1–54 (MSSRMAGSAILRHVGGVRLFTASATSPAAAAAAAARPFLAGGEAVPGVWGLRLM), are a transit peptide targeting the mitochondrion. A helical transmembrane segment spans residues 157-177 (AMMLETVAAVPGMVGGMLLHL). Positions 161, 200, and 203 each coordinate Fe cation. A helical membrane pass occupies residues 219 to 239 (ALVITVQGVFFNAYFLGYLLS). 3 residues coordinate Fe cation: glutamate 251, glutamate 302, and histidine 305.

This sequence belongs to the alternative oxidase family. Homodimer; disulfide-linked. It depends on Fe cation as a cofactor. Expressed in roots, leaf sheaths and leaf blades.

It localises to the mitochondrion inner membrane. It carries out the reaction 2 a ubiquinol + O2 = 2 a ubiquinone + 2 H2O. Its function is as follows. Catalyzes the cyanide-resistant oxidation of ubiquinol and the reduction of molecular oxygen to water, but does not translocate protons and consequently is not linked to oxidative phosphorylation. May increase respiration when the cytochrome respiratory pathway is restricted, or in response to low temperatures. The sequence is that of Ubiquinol oxidase 1a, mitochondrial from Oryza sativa subsp. japonica (Rice).